Reading from the N-terminus, the 264-residue chain is Caffeoyl-CoA O-methyltransferase 2 (264 aa).

The span at 1–20 shows a compositional bias: low complexity; it reads MATTATEATKTTAPAQEQQA. The disordered stretch occupies residues 1–37; the sequence is MATTATEATKTTAPAQEQQANGNGNGEQKTRHSEVGH. Positions 28–37 are enriched in basic and acidic residues; sequence QKTRHSEVGH. Lys38 is a substrate binding site. Residues Thr80, Glu102, 104 to 105, Ser110, Asp128, and Ala157 contribute to the S-adenosyl-L-methionine site; that span reads GV. Substrate is bound at residue Asp180. An a divalent metal cation-binding site is contributed by Asp180. Position 182 (Asp182) interacts with S-adenosyl-L-methionine. A divalent metal cation is bound by residues Asp206 and Asn207. Asn211 is a binding site for substrate.

Belongs to the class I-like SAM-binding methyltransferase superfamily. Cation-dependent O-methyltransferase family. CCoAMT subfamily. A divalent metal cation is required as a cofactor.

It carries out the reaction (E)-caffeoyl-CoA + S-adenosyl-L-methionine = (E)-feruloyl-CoA + S-adenosyl-L-homocysteine + H(+). It functions in the pathway aromatic compound metabolism; phenylpropanoid biosynthesis. Functionally, methylates caffeoyl-CoA to feruloyl-CoA and 5-hydroxyferuloyl-CoA to sinapoyl-CoA. Plays a role in the synthesis of feruloylated polysaccharides. Involved in the reinforcement of the plant cell wall. Also involved in the responding to wounding or pathogen challenge by the increased formation of cell wall-bound ferulic acid polymers. This is Caffeoyl-CoA O-methyltransferase 2 (CCOAOMT2) from Zea mays (Maize).